The sequence spans 337 residues: Phosphate acyltransferase (337 aa).

The protein belongs to the PlsX family. As to quaternary structure, homodimer. Probably interacts with PlsY.

The protein localises to the cytoplasm. It catalyses the reaction a fatty acyl-[ACP] + phosphate = an acyl phosphate + holo-[ACP]. Its pathway is lipid metabolism; phospholipid metabolism. Its function is as follows. Catalyzes the reversible formation of acyl-phosphate (acyl-PO(4)) from acyl-[acyl-carrier-protein] (acyl-ACP). This enzyme utilizes acyl-ACP as fatty acyl donor, but not acyl-CoA. This Ehrlichia canis (strain Jake) protein is Phosphate acyltransferase.